We begin with the raw amino-acid sequence, 316 residues long: Ribonuclease HIII (316 aa).

Residues 101-316 (QVIIGSDEVG…SNFQQIIKNK (216 aa)) enclose the RNase H type-2 domain. Residues Asp-107, Glu-108, and Asp-211 each contribute to the a divalent metal cation site.

The protein belongs to the RNase HII family. RnhC subfamily. The cofactor is Mn(2+). Mg(2+) serves as cofactor.

The protein resides in the cytoplasm. It carries out the reaction Endonucleolytic cleavage to 5'-phosphomonoester.. Functionally, endonuclease that specifically degrades the RNA of RNA-DNA hybrids. In Ureaplasma parvum serovar 3 (strain ATCC 700970), this protein is Ribonuclease HIII (rnhC).